The sequence spans 269 residues: Bis(5'-nucleosyl)-tetraphosphatase, symmetrical (269 aa).

The protein belongs to the Ap4A hydrolase family.

The catalysed reaction is P(1),P(4)-bis(5'-adenosyl) tetraphosphate + H2O = 2 ADP + 2 H(+). In terms of biological role, hydrolyzes diadenosine 5',5'''-P1,P4-tetraphosphate to yield ADP. The protein is Bis(5'-nucleosyl)-tetraphosphatase, symmetrical of Vibrio vulnificus (strain CMCP6).